The following is a 136-amino-acid chain: Small ribosomal subunit protein uS9 (136 aa).

The segment at 96–136 (LSPDNRKPLKTEGHLSRDPRAKERRKYGLKKARKAPQFSKR) is disordered. Residues 98 to 116 (PDNRKPLKTEGHLSRDPRA) are compositionally biased toward basic and acidic residues. Residues 117–136 (KERRKYGLKKARKAPQFSKR) are compositionally biased toward basic residues.

This sequence belongs to the universal ribosomal protein uS9 family.

The chain is Small ribosomal subunit protein uS9 from Prochlorococcus marinus (strain MIT 9515).